Consider the following 847-residue polypeptide: Cancer-associated gene 1 protein homolog (847 aa).

The disordered stretch occupies residues 118–161 (EEKPELQSQVYNDPADASQKPDPLKEESLMESSTSENKDELVHE). Positions 377–567 (NVILEKNDIN…AAKREAQACT (191 aa)) form a coiled coil.

This is Cancer-associated gene 1 protein homolog (Cage1) from Rattus norvegicus (Rat).